Reading from the N-terminus, the 247-residue chain is Retbindin (247 aa).

Residues 1–31 form the signal peptide; sequence MAHEGHSQHSGLVWALRPILAWIFLVACGWS. Intrachain disulfides connect C99–C169, C106–C146, C139–C183, and C152–C165.

The protein belongs to the folate receptor family. Not N-glycosylated. Expressed in the peripheral retina where it localizes to the inter-photoreceptor matrix (at protein level). May be produced by rod photoreceptors (at protein level).

It localises to the secreted. The protein resides in the extracellular space. The protein localises to the extracellular matrix. Its subcellular location is the interphotoreceptor matrix. It is found in the cell membrane. In terms of biological role, riboflavin-binding protein which might have a role in retinal flavin transport. The polypeptide is Retbindin (Rtbdn) (Mus musculus (Mouse)).